Consider the following 334-residue polypeptide: Phenylalanine--tRNA ligase alpha subunit (334 aa).

E249 is a Mg(2+) binding site.

It belongs to the class-II aminoacyl-tRNA synthetase family. Phe-tRNA synthetase alpha subunit type 1 subfamily. As to quaternary structure, tetramer of two alpha and two beta subunits. The cofactor is Mg(2+).

It localises to the cytoplasm. It catalyses the reaction tRNA(Phe) + L-phenylalanine + ATP = L-phenylalanyl-tRNA(Phe) + AMP + diphosphate + H(+). This chain is Phenylalanine--tRNA ligase alpha subunit, found in Desulfosudis oleivorans (strain DSM 6200 / JCM 39069 / Hxd3) (Desulfococcus oleovorans).